The sequence spans 133 residues: Small ribosomal subunit protein bS6 (133 aa).

The protein belongs to the bacterial ribosomal protein bS6 family.

Its function is as follows. Binds together with bS18 to 16S ribosomal RNA. This Borrelia turicatae (strain 91E135) protein is Small ribosomal subunit protein bS6.